We begin with the raw amino-acid sequence, 59 residues long: Large ribosomal subunit protein uL30 (59 aa).

The protein belongs to the universal ribosomal protein uL30 family. Part of the 50S ribosomal subunit.

In Staphylococcus haemolyticus (strain JCSC1435), this protein is Large ribosomal subunit protein uL30.